A 311-amino-acid polypeptide reads, in one-letter code: MIKEGFLIKTPKKLIALLGPSGSGKSALSIELAQELDAEIFSLDSLSIYKDINIASAKPSLKERKNIKHYALDHLNIDEKNNAPLFKTLLEDAMRVSSKEILLIVGGSSFYLKSILEGLSRMPKLSGEEVVKIEREIATLSNPYIFLKSIDPNMAFKIHPNDTYRTHKALEIFYATCTPPSEYFKANPKKPFEHAISLFALSIEKSALHNNIKRRTKNMLHSGLVEEIKALYTQYPKDSQPFKAIGVKESVLFLEKRLTLKELEEAITSNTMKLAKRQNTFNKTQFNNLYVGSAEEVRHAILKHSKSGIKG.

ATP is bound at residue 19-26 (GPSGSGKS). Residue 21-26 (SGSGKS) participates in substrate binding. Residues 44-47 (DSLS) are interaction with substrate tRNA.

The protein belongs to the IPP transferase family. As to quaternary structure, monomer. The cofactor is Mg(2+).

It catalyses the reaction adenosine(37) in tRNA + dimethylallyl diphosphate = N(6)-dimethylallyladenosine(37) in tRNA + diphosphate. In terms of biological role, catalyzes the transfer of a dimethylallyl group onto the adenine at position 37 in tRNAs that read codons beginning with uridine, leading to the formation of N6-(dimethylallyl)adenosine (i(6)A). In Helicobacter pylori (strain ATCC 700392 / 26695) (Campylobacter pylori), this protein is tRNA dimethylallyltransferase.